Reading from the N-terminus, the 225-residue chain is Ribonuclease 3 (225 aa).

In terms of domain architecture, RNase III spans 4–127; it reads IEKLEQSLTY…IIGAIHLEAG (124 aa). E40 lines the Mg(2+) pocket. D44 is an active-site residue. Positions 113 and 116 each coordinate Mg(2+). E116 is a catalytic residue. A DRBM domain is found at 154 to 223; that stretch reads DYKTKLQEIT…AKIALEKLGS (70 aa).

It belongs to the ribonuclease III family. In terms of assembly, homodimer. The cofactor is Mg(2+).

The protein resides in the cytoplasm. The enzyme catalyses Endonucleolytic cleavage to 5'-phosphomonoester.. Digests double-stranded RNA. Involved in the processing of primary rRNA transcript to yield the immediate precursors to the large and small rRNAs (23S and 16S). Processes some mRNAs, and tRNAs when they are encoded in the rRNA operon. Processes pre-crRNA and tracrRNA of type II CRISPR loci if present in the organism. This is Ribonuclease 3 from Campylobacter jejuni subsp. doylei (strain ATCC BAA-1458 / RM4099 / 269.97).